The chain runs to 356 residues: sn-glycerol-3-phosphate import ATP-binding protein UgpC (356 aa).

The ABC transporter domain occupies 4–235; that stretch reads LKLQAVTKSW…PASLFVASFI (232 aa). Residue 37-44 participates in ATP binding; sequence GPSGCGKS.

This sequence belongs to the ABC transporter superfamily. sn-glycerol-3-phosphate importer (TC 3.A.1.1.3) family. As to quaternary structure, the complex is composed of two ATP-binding proteins (UgpC), two transmembrane proteins (UgpA and UgpE) and a solute-binding protein (UgpB).

It localises to the cell inner membrane. It carries out the reaction sn-glycerol 3-phosphate(out) + ATP + H2O = sn-glycerol 3-phosphate(in) + ADP + phosphate + H(+). The catalysed reaction is glycerol 2-phosphate(out) + ATP + H2O = glycerol 2-phosphate(in) + ADP + phosphate + H(+). Its activity is regulated as follows. ATPase activity is stimulated when UgpB is bound to G3P. Transport is inhibited in vivo by increasing levels of internal phosphate. However, ATPase activity in proteoliposomes is neither inhibited by phosphate nor by the signal transducing protein PhoU or the phosphodiesterase UgpQ. Activated by gluconate and inhibited by fumarate. Functionally, part of the ABC transporter complex UgpBAEC involved in sn-glycerol-3-phosphate (G3P) import. Responsible for energy coupling to the transport system. Can also transport glycerophosphoryl diesters, which are hydrolyzed to G3P and alcohol during transport. The G3P moiety can be detected in the cytoplasm whereas the corresponding alcohol is usually found in the culture medium. It was proposed by Yang et al that the complex could also transport glycerol-2-phosphate (G2P) in vivo, but it was shown later by Wuttge et al that UgpB does not bind G2P, questioning this transport activity. G2P might be converted in the periplasm to G3P before its transport. The protein is sn-glycerol-3-phosphate import ATP-binding protein UgpC of Escherichia coli (strain K12).